The primary structure comprises 322 residues: HPr kinase/phosphorylase (322 aa).

Catalysis depends on residues histidine 146 and lysine 167. ATP is bound at residue 161-168 (GDSGLGKS). Serine 168 is a binding site for Mg(2+). The active-site Proton acceptor; for phosphorylation activity. Proton donor; for dephosphorylation activity is the aspartate 185. Positions 209-218 (LEVRGLGLLD) are important for the catalytic mechanism of both phosphorylation and dephosphorylation. Position 210 (glutamate 210) interacts with Mg(2+). Residue arginine 250 is part of the active site. The segment at 271–276 (QVAAGR) is important for the catalytic mechanism of dephosphorylation.

The protein belongs to the HPrK/P family. In terms of assembly, homohexamer. It depends on Mg(2+) as a cofactor.

The enzyme catalyses [HPr protein]-L-serine + ATP = [HPr protein]-O-phospho-L-serine + ADP + H(+). It catalyses the reaction [HPr protein]-O-phospho-L-serine + phosphate + H(+) = [HPr protein]-L-serine + diphosphate. Catalyzes the ATP- as well as the pyrophosphate-dependent phosphorylation of a specific serine residue in HPr, a phosphocarrier protein of the phosphoenolpyruvate-dependent sugar phosphotransferase system (PTS). HprK/P also catalyzes the pyrophosphate-producing, inorganic phosphate-dependent dephosphorylation (phosphorolysis) of seryl-phosphorylated HPr (P-Ser-HPr). The polypeptide is HPr kinase/phosphorylase (Burkholderia lata (strain ATCC 17760 / DSM 23089 / LMG 22485 / NCIMB 9086 / R18194 / 383)).